The primary structure comprises 483 residues: Protein nucleotidyltransferase YdiU (483 aa).

ATP contacts are provided by Gly87, Gly89, Arg90, Lys110, Asp122, Gly123, Arg173, and Arg180. The active-site Proton acceptor is the Asp249. Mg(2+) contacts are provided by Asn250 and Asp259. Asp259 lines the ATP pocket.

The protein belongs to the SELO family. Requires Mg(2+) as cofactor. Mn(2+) is required as a cofactor.

It carries out the reaction L-seryl-[protein] + ATP = 3-O-(5'-adenylyl)-L-seryl-[protein] + diphosphate. It catalyses the reaction L-threonyl-[protein] + ATP = 3-O-(5'-adenylyl)-L-threonyl-[protein] + diphosphate. The enzyme catalyses L-tyrosyl-[protein] + ATP = O-(5'-adenylyl)-L-tyrosyl-[protein] + diphosphate. The catalysed reaction is L-histidyl-[protein] + UTP = N(tele)-(5'-uridylyl)-L-histidyl-[protein] + diphosphate. It carries out the reaction L-seryl-[protein] + UTP = O-(5'-uridylyl)-L-seryl-[protein] + diphosphate. It catalyses the reaction L-tyrosyl-[protein] + UTP = O-(5'-uridylyl)-L-tyrosyl-[protein] + diphosphate. In terms of biological role, nucleotidyltransferase involved in the post-translational modification of proteins. It can catalyze the addition of adenosine monophosphate (AMP) or uridine monophosphate (UMP) to a protein, resulting in modifications known as AMPylation and UMPylation. The polypeptide is Protein nucleotidyltransferase YdiU (Yersinia pseudotuberculosis serotype O:1b (strain IP 31758)).